The chain runs to 404 residues: Glycosylated lysosomal membrane protein (404 aa).

A signal peptide spans 1–35 (MRGSVERGWGWGHCASSPLLLWTLLLFAAPFGLLG). At 36 to 371 (EKTRQLSLEV…GRLVPTSPGH (336 aa)) the chain is on the lumenal side. 5 N-linked (GlcNAc...) asparagine glycosylation sites follow: N65, N134, N159, N186, and N229. A helical transmembrane segment spans residues 372–392 (HGSALGAPGLMLLGGGLVLLL). The Cytoplasmic segment spans residues 393-404 (HHRKYSEYQSIN). Residues 400–404 (YQSIN) carry the Lysosomal targeting motif motif.

This sequence belongs to the GLMP family. Interacts (via lumenal domain) with lysosomal protein MFSD1; the interaction starts while both proteins are still in the endoplasmic reticulum and is required for stabilization of MFSD1 in lysosomes but has no direct effect on its targeting to lysosomes or transporter activity. Post-translationally, highly N-glycosylated. N-glycosylation is essential for GLMP stability and for MFSD1 lysosomal localization.

Its subcellular location is the lysosome membrane. Its function is as follows. Required to protect lysosomal transporter MFSD1 from lysosomal proteolysis and for MFSD1 lysosomal localization. The polypeptide is Glycosylated lysosomal membrane protein (Pongo abelii (Sumatran orangutan)).